The following is a 377-amino-acid chain: dTDP-fucopyranose mutase (377 aa).

FAD contacts are provided by residues serine 12, 31 to 32 (DD), asparagine 39, 58 to 59 (HI), arginine 348, and 355 to 360 (LDMDVC).

This sequence belongs to the UDP-galactopyranose/dTDP-fucopyranose mutase family. FAD serves as cofactor.

It catalyses the reaction dTDP-alpha-D-fucose = dTDP-alpha-D-fucofuranose. It functions in the pathway bacterial outer membrane biogenesis; LPS O-antigen biosynthesis. Its activity is regulated as follows. Inhibited by Cu(2+), while other divalent cations such as Ca(2+), Co(2+), Fe(2+) and Mg(2+) have no obvious effects on enzyme activity. Its function is as follows. Catalyzes the conversion of dTDP-alpha-D-fucopyranose to dTDP-alpha-D-fucofuranose. This is a step in the biosynthesis of D-fucofuranose, a component of E.coli O52 O antigen. This Escherichia coli protein is dTDP-fucopyranose mutase (fcf2).